The following is a 237-amino-acid chain: Small ribosomal subunit protein uS3 (237 aa).

Positions 39–107 (IRAYLMEELK…ETHLNIVEVR (69 aa)) constitute a KH type-2 domain. Residues 213–237 (MASERRATESDNQGGGGRDRRRENA) form a disordered region.

Belongs to the universal ribosomal protein uS3 family. Part of the 30S ribosomal subunit. Forms a tight complex with proteins S10 and S14.

Its function is as follows. Binds the lower part of the 30S subunit head. Binds mRNA in the 70S ribosome, positioning it for translation. The chain is Small ribosomal subunit protein uS3 from Sinorhizobium fredii (strain NBRC 101917 / NGR234).